We begin with the raw amino-acid sequence, 1145 residues long: Nucleolar protein 6 (1145 aa).

Positions 1-46 (MQKKRNRAGPPQQEAASDDGEMSDSSDKMEVAQGKGKSAVKRAPDA) are disordered.

This sequence belongs to the NRAP family. In terms of assembly, part of the small subunit (SSU) processome, composed of more than 70 proteins and the RNA chaperone small nucleolar RNA (snoRNA) U3.

The protein localises to the nucleus. It localises to the nucleolus. It is found in the chromosome. Part of the small subunit (SSU) processome, first precursor of the small eukaryotic ribosomal subunit. During the assembly of the SSU processome in the nucleolus, many ribosome biogenesis factors, an RNA chaperone and ribosomal proteins associate with the nascent pre-rRNA and work in concert to generate RNA folding, modifications, rearrangements and cleavage as well as targeted degradation of pre-ribosomal RNA by the RNA exosome. The chain is Nucleolar protein 6 (nol6) from Xenopus tropicalis (Western clawed frog).